A 173-amino-acid chain; its full sequence is NADH-ubiquinone oxidoreductase chain 6 (173 aa).

Helical transmembrane passes span 1–21 (MTYFVLFLGLCFVLGGLAVAS), 27–47 (YGVVGLVLASVAGCGWLLSLG), 48–68 (VSFVSLVLFMVYLGGMLVVFV), 87–107 (VVGYGVGFVMVLMVGMVVGGF), and 139–159 (CGVGMFLVAGWGLLLTLFVVL).

Belongs to the complex I subunit 6 family.

Its subcellular location is the mitochondrion membrane. The enzyme catalyses a ubiquinone + NADH + 5 H(+)(in) = a ubiquinol + NAD(+) + 4 H(+)(out). In terms of biological role, core subunit of the mitochondrial membrane respiratory chain NADH dehydrogenase (Complex I) that is believed to belong to the minimal assembly required for catalysis. Complex I functions in the transfer of electrons from NADH to the respiratory chain. The immediate electron acceptor for the enzyme is believed to be ubiquinone. This Aethia pusilla (Least auklet) protein is NADH-ubiquinone oxidoreductase chain 6 (MT-ND6).